The following is a 431-amino-acid chain: Histidinol dehydrogenase (431 aa).

Tyrosine 127, glutamine 190, and asparagine 213 together coordinate NAD(+). Substrate-binding residues include serine 238, glutamine 260, and histidine 263. Positions 260 and 263 each coordinate Zn(2+). Catalysis depends on proton acceptor residues glutamate 329 and histidine 330. Substrate contacts are provided by histidine 330, aspartate 363, glutamate 417, and histidine 422. Aspartate 363 serves as a coordination point for Zn(2+). Histidine 422 contacts Zn(2+).

The protein belongs to the histidinol dehydrogenase family. It depends on Zn(2+) as a cofactor.

The catalysed reaction is L-histidinol + 2 NAD(+) + H2O = L-histidine + 2 NADH + 3 H(+). The protein operates within amino-acid biosynthesis; L-histidine biosynthesis; L-histidine from 5-phospho-alpha-D-ribose 1-diphosphate: step 9/9. Its function is as follows. Catalyzes the sequential NAD-dependent oxidations of L-histidinol to L-histidinaldehyde and then to L-histidine. The protein is Histidinol dehydrogenase of Methanopyrus kandleri (strain AV19 / DSM 6324 / JCM 9639 / NBRC 100938).